Consider the following 224-residue polypeptide: Phosphoribosylformylglycinamidine synthase subunit PurQ (224 aa).

The Glutamine amidotransferase type-1 domain maps to 3 to 224; it reads FGVVVFPGSN…GLLEKVVALA (222 aa). Cysteine 86 serves as the catalytic Nucleophile. Active-site residues include histidine 195 and glutamate 197.

As to quaternary structure, part of the FGAM synthase complex composed of 1 PurL, 1 PurQ and 2 PurS subunits.

The protein resides in the cytoplasm. The enzyme catalyses N(2)-formyl-N(1)-(5-phospho-beta-D-ribosyl)glycinamide + L-glutamine + ATP + H2O = 2-formamido-N(1)-(5-O-phospho-beta-D-ribosyl)acetamidine + L-glutamate + ADP + phosphate + H(+). The catalysed reaction is L-glutamine + H2O = L-glutamate + NH4(+). It participates in purine metabolism; IMP biosynthesis via de novo pathway; 5-amino-1-(5-phospho-D-ribosyl)imidazole from N(2)-formyl-N(1)-(5-phospho-D-ribosyl)glycinamide: step 1/2. Part of the phosphoribosylformylglycinamidine synthase complex involved in the purines biosynthetic pathway. Catalyzes the ATP-dependent conversion of formylglycinamide ribonucleotide (FGAR) and glutamine to yield formylglycinamidine ribonucleotide (FGAM) and glutamate. The FGAM synthase complex is composed of three subunits. PurQ produces an ammonia molecule by converting glutamine to glutamate. PurL transfers the ammonia molecule to FGAR to form FGAM in an ATP-dependent manner. PurS interacts with PurQ and PurL and is thought to assist in the transfer of the ammonia molecule from PurQ to PurL. This chain is Phosphoribosylformylglycinamidine synthase subunit PurQ, found in Nostoc sp. (strain PCC 7120 / SAG 25.82 / UTEX 2576).